We begin with the raw amino-acid sequence, 976 residues long: Receptor-like protein 14 (976 aa).

Residues 1–26 form the signal peptide; sequence MERKVFSGQNLIWVMLLLVQLRGYKC. Residues 27 to 928 lie on the Extracellular side of the membrane; sequence CIEKERKALL…DDDDEAAIDM (902 aa). N-linked (GlcNAc...) asparagine glycans are attached at residues asparagine 60, asparagine 75, asparagine 98, asparagine 112, asparagine 151, asparagine 185, and asparagine 200. LRR repeat units follow at residues 105 to 127, 137 to 160, 162 to 185, 186 to 209, 210 to 233, 234 to 258, 260 to 283, 284 to 306, 308 to 331, 333 to 358, 359 to 381, 382 to 405, 407 to 428, 429 to 452, 454 to 477, 478 to 501, and 503 to 528; these read FEEL…LFDD, LRNL…FLNA, TSLT…ELKN, LTKL…FTHL, EKLK…ELKV, LTNL…VFCE, KNLR…LGNL, NKLR…SFNS, ESLE…PLAN, TKLK…WLPK, FQLT…LVYQ, TNLR…LLEN, PELK…PTIV, HKLQ…IGHV, PRLL…MGEM, NDIS…LLTG, and FSLI…RLTS. N-linked (GlcNAc...) asparagine glycosylation occurs at asparagine 331. Asparagine 416 is a glycosylation site (N-linked (GlcNAc...) asparagine). 2 N-linked (GlcNAc...) asparagine glycosylation sites follow: asparagine 460 and asparagine 489. The LRR 18; degenerate repeat unit spans residues 530-549; it reads IVLRMHNNLFTGEIGVGLRT. LRR repeat units lie at residues 550–573, 575–599, 600–623, 625–645, 646–669, 671–692, 693–715, 782–805, 806–829, 831–854, and 856–879; these read LVNL…SIPP, SSHL…LLAI, HHLN…VVNS, YGIK…VTLL, ENAY…VNTG, MITL…LCDL, TSIR…CLNH, LDYM…ELGD, LSKL…NFSK, KDIE…LTNL, and SLAV…QFNT. N-linked (GlcNAc...) asparagine glycosylation is present at asparagine 552. A glycan (N-linked (GlcNAc...) asparagine) is linked at asparagine 633. Asparagine 680 is a glycosylation site (N-linked (GlcNAc...) asparagine). 5 N-linked (GlcNAc...) asparagine glycosylation sites follow: asparagine 813, asparagine 826, asparagine 853, asparagine 861, and asparagine 866. The disordered stretch occupies residues 897-922; that stretch reads DRSCEGKKNTKEADNGGEEEEEDDDD. Residues 898–910 show a composition bias toward basic and acidic residues; the sequence is RSCEGKKNTKEAD. Acidic residues predominate over residues 911-922; it reads NGGEEEEEDDDD. Residues 929–949 traverse the membrane as a helical segment; the sequence is VVLYWTTGSTYAIALIGILVL. The Cytoplasmic segment spans residues 950-976; that stretch reads MCFDCPWRRTWLCIVDAFIASGKSMFS.

The protein belongs to the RLP family.

Its subcellular location is the cell membrane. The protein is Receptor-like protein 14 of Arabidopsis thaliana (Mouse-ear cress).